Reading from the N-terminus, the 604-residue chain is MASKSSRSQEHIRNFCIIAHIDHGKSTLADRLLESTGTVDNRGKKTQMLDDLALEQQRGITIKARAVAMRYKRDGIEYELNLIDTPGHVDFQYEVSRSLACCEGALLLVDAFQGVEAQTVANAFAAMEHDLTIVPVINKIDLIHARPDEVAEEMMNSLGTDPDECKRVSAKTGEGVAALLDAIVDSVPAPTGDPKAVLQAMVFDSNYDDFRGAITYIRVMQGTVRKGQKIKFLRAGSVHDVVELGQFAPSRVPCDELVAGQVGYLICNIKSLGDVHIGDTISIAGNDPAPALPGYDRPKRMVYCGLFPSDGQDFSELRDALERLAVNDPSFEFEPETSDALGFGFRCGFLGLLHMEIVQQRLEQESDIDLVQTAPNVTYEITDKRGVTKNIHKPQDVPDPGDIEKFCQPIVRCNVIVPEEYIGPVMKLCQERRGIQKGHEVLGASRAMLTYDIPLAEVIYDLHDRIKSCTRGYGTLDYEMVGYEEADLCRLDILVNGNRVDALSVVCHRADADRRGRAVAKKLKSEIERHMFEVAVQAAIGSRVIARETVPAMRKNVTAKCYGGDITRKRKLLQKQKEGKKRMKAVGNVEISQKAFMAVLTDGE.

The region spanning 10 to 191 (EHIRNFCIIA…AIVDSVPAPT (182 aa)) is the tr-type G domain. Residues 22–27 (DHGKST) and 138–141 (NKID) contribute to the GTP site.

It belongs to the TRAFAC class translation factor GTPase superfamily. Classic translation factor GTPase family. LepA subfamily.

Its subcellular location is the cell inner membrane. The enzyme catalyses GTP + H2O = GDP + phosphate + H(+). In terms of biological role, required for accurate and efficient protein synthesis under certain stress conditions. May act as a fidelity factor of the translation reaction, by catalyzing a one-codon backward translocation of tRNAs on improperly translocated ribosomes. Back-translocation proceeds from a post-translocation (POST) complex to a pre-translocation (PRE) complex, thus giving elongation factor G a second chance to translocate the tRNAs correctly. Binds to ribosomes in a GTP-dependent manner. The protein is Elongation factor 4 1 of Rhodopirellula baltica (strain DSM 10527 / NCIMB 13988 / SH1).